The sequence spans 620 residues: Glutathione-regulated potassium-efflux system protein KefC (620 aa).

12 consecutive transmembrane segments (helical) span residues 4-24, 26-46, 54-74, 90-110, 114-134, 149-169, 178-198, 218-238, 270-290, 294-314, 327-347, and 359-379; these read HTLIQALIYLGSAALIVPIAV, LGLGSVLGYLIAGCIIGPWGL, SILHFAEIGVVLMLFIIGLEL, GALQMVICGGLLGLFCMLLGL, VAELIGMTLALSSTAIAMQAM, FAVLLFQDIAAIPLVAMIPLL, MGAFALSALKVAGALVLVVLL, VFSAVALFLVFGFGLLLEEVG, GLLLGLFFIGVGMSIDFGTLL, LRIVILLLGFLIIKIAMLWLI, WFAVLLGQGSEFAFVVFGTAQ, and SLTLAVALSMAATPILLVILN. Residues 399 to 518 enclose the RCK N-terminal domain; it reads QPRVIIAGFG…AGVEKPERET (120 aa). The disordered stretch occupies residues 597–620; that stretch reads GWQGTEEGKHTGNMADEPETKPSS.

Belongs to the monovalent cation:proton antiporter 2 (CPA2) transporter (TC 2.A.37) family. KefC subfamily. As to quaternary structure, homodimer. Interacts with the regulatory subunit KefF.

The protein localises to the cell inner membrane. Its function is as follows. Pore-forming subunit of a potassium efflux system that confers protection against electrophiles. Catalyzes K(+)/H(+) antiport. The chain is Glutathione-regulated potassium-efflux system protein KefC from Shigella sonnei (strain Ss046).